The primary structure comprises 160 residues: Transcriptional repressor NrdR (160 aa).

The segment at cysteine 3–cysteine 34 is a zinc-finger region. One can recognise an ATP-cone domain in the interval proline 49 to aspartate 139.

Belongs to the NrdR family. Zn(2+) serves as cofactor.

Its function is as follows. Negatively regulates transcription of bacterial ribonucleotide reductase nrd genes and operons by binding to NrdR-boxes. This Nitrosomonas eutropha (strain DSM 101675 / C91 / Nm57) protein is Transcriptional repressor NrdR.